A 664-amino-acid polypeptide reads, in one-letter code: Lysophospholipase 1 (664 aa).

The signal sequence occupies residues 1 to 22 (MKLQSLLVSAAVLTSLTENVNA). 19 N-linked (GlcNAc...) asparagine glycosylation sites follow: asparagine 26, asparagine 33, asparagine 52, asparagine 78, asparagine 92, asparagine 123, asparagine 160, asparagine 170, asparagine 215, asparagine 277, asparagine 307, asparagine 345, asparagine 388, asparagine 459, asparagine 489, asparagine 513, asparagine 541, asparagine 565, and asparagine 582. A PLA2c domain is found at 35–586 (TCDDDINLVR…TNYCWNGTID (552 aa)). Asparagine 634 carries the GPI-anchor amidated asparagine lipid modification. Positions 635-664 (AGNALVNYSNLNTNTFIGVLSVISAVFGLI) are cleaved as a propeptide — removed in mature form.

This sequence belongs to the lysophospholipase family.

It is found in the cell membrane. The catalysed reaction is a 1-acyl-sn-glycero-3-phosphocholine + H2O = sn-glycerol 3-phosphocholine + a fatty acid + H(+). It carries out the reaction a 1-acyl-sn-glycero-3-phospho-(1D-myo-inositol) + H2O = sn-glycero-3-phospho-1D-myo-inositol + a fatty acid + H(+). The enzyme catalyses a 1-acyl-sn-glycero-3-phospho-L-serine + H2O = sn-glycero-3-phospho-L-serine + a fatty acid + H(+). It catalyses the reaction a 1,2-diacyl-sn-glycero-3-phospho-(1D-myo-inositol) + 2 H2O = sn-glycero-3-phospho-1D-myo-inositol + 2 a carboxylate + 2 H(+). The catalysed reaction is a 1,2-diacyl-sn-glycero-3-phospho-L-serine + 2 H2O = sn-glycero-3-phospho-L-serine + 2 a carboxylate + 2 H(+). It carries out the reaction 2 1-hexadecanoyl-sn-glycero-3-phosphocholine = 1,2-dihexadecanoyl-sn-glycero-3-phosphocholine + sn-glycerol 3-phosphocholine. The enzyme catalyses 1-hexadecanoyl-sn-glycero-3-phosphocholine + H2O = sn-glycerol 3-phosphocholine + hexadecanoate + H(+). It catalyses the reaction 1,2-dihexadecanoyl-sn-glycero-3-phosphocholine + H2O = 1-hexadecanoyl-sn-glycero-3-phosphocholine + hexadecanoate + H(+). Its function is as follows. Sequentially removes both fatty acyl groups from diacylglycerophospholipids and therefore has both phospholipase B and lysophospholipase activities. It also displays transacylase activity. Substrate preference is phosphatidylserine &gt; phosphatidylinositol &gt;&gt; phosphatidylcholine &gt; phosphatidylethanolamine. The substrate specificity is pH- and ion-dependent. In contrast with activities observed at optimum pH 3.5, the order of substrate preference at pH 5.5 is phosphatidylcholine = phosphatidylethanolamine &gt;&gt; phosphatidylinositol. Degrades predominantly phosphatidylcholine and to some extent phosphatidylinositol in vivo. The chain is Lysophospholipase 1 from Saccharomyces cerevisiae (strain ATCC 204508 / S288c) (Baker's yeast).